The sequence spans 393 residues: Pyridoxamine--pyruvate transaminase (393 aa).

Residues Glu68, Tyr95, and Thr146 each coordinate pyridoxal 5'-phosphate. Lys197 carries the post-translational modification N6-(pyridoxal phosphate)lysine. Arg345 lines the pyridoxal 5'-phosphate pocket.

It belongs to the class-V pyridoxal-phosphate-dependent aminotransferase family. In terms of assembly, homotetramer. Pyridoxal 5'-phosphate serves as cofactor.

The enzyme catalyses pyridoxamine + pyruvate = pyridoxal + L-alanine. Catalyzes a reversible transamination reaction between pyridoxamine and pyruvate to form pyridoxal and L-alanine. The protein is Pyridoxamine--pyruvate transaminase (ppaT) of Mesorhizobium japonicum (strain LMG 29417 / CECT 9101 / MAFF 303099) (Mesorhizobium loti (strain MAFF 303099)).